The sequence spans 379 residues: Chaperone protein DnaJ (379 aa).

One can recognise a J domain in the interval 5–69 (EYYERLGVDK…QKRAAYDQYG (65 aa)). The CR-type zinc finger occupies 141 to 223 (GVEKQVKYNR…CHGSGHEKVA (83 aa)). Zn(2+) is bound by residues Cys-154, Cys-157, Cys-171, Cys-174, Cys-197, Cys-200, Cys-211, and Cys-214. CXXCXGXG motif repeat units lie at residues 154–161 (CHTCGGSG), 171–178 (CHKCGGRG), 197–204 (CDVCNGTG), and 211–218 (CETCHGSG).

This sequence belongs to the DnaJ family. As to quaternary structure, homodimer. Zn(2+) is required as a cofactor.

Its subcellular location is the cytoplasm. Functionally, participates actively in the response to hyperosmotic and heat shock by preventing the aggregation of stress-denatured proteins and by disaggregating proteins, also in an autonomous, DnaK-independent fashion. Unfolded proteins bind initially to DnaJ; upon interaction with the DnaJ-bound protein, DnaK hydrolyzes its bound ATP, resulting in the formation of a stable complex. GrpE releases ADP from DnaK; ATP binding to DnaK triggers the release of the substrate protein, thus completing the reaction cycle. Several rounds of ATP-dependent interactions between DnaJ, DnaK and GrpE are required for fully efficient folding. Also involved, together with DnaK and GrpE, in the DNA replication of plasmids through activation of initiation proteins. In Lactococcus lactis subsp. lactis (strain IL1403) (Streptococcus lactis), this protein is Chaperone protein DnaJ.